Here is an 87-residue protein sequence, read N- to C-terminus: Phosphoribosyl-ATP pyrophosphatase (87 aa).

The protein belongs to the PRA-PH family.

It localises to the cytoplasm. The catalysed reaction is 1-(5-phospho-beta-D-ribosyl)-ATP + H2O = 1-(5-phospho-beta-D-ribosyl)-5'-AMP + diphosphate + H(+). Its pathway is amino-acid biosynthesis; L-histidine biosynthesis; L-histidine from 5-phospho-alpha-D-ribose 1-diphosphate: step 2/9. In Clavibacter sepedonicus (Clavibacter michiganensis subsp. sepedonicus), this protein is Phosphoribosyl-ATP pyrophosphatase.